We begin with the raw amino-acid sequence, 447 residues long: N-succinylarginine dihydrolase (447 aa).

Substrate is bound by residues 19–28, Asn-110, and 137–138; these read AGLSFGNEAS and HR. The active site involves Glu-174. Substrate is bound at residue Arg-212. His-248 is an active-site residue. Asp-250 and Asn-359 together coordinate substrate. The active-site Nucleophile is the Cys-365.

This sequence belongs to the succinylarginine dihydrolase family. Homodimer.

The catalysed reaction is N(2)-succinyl-L-arginine + 2 H2O + 2 H(+) = N(2)-succinyl-L-ornithine + 2 NH4(+) + CO2. The protein operates within amino-acid degradation; L-arginine degradation via AST pathway; L-glutamate and succinate from L-arginine: step 2/5. In terms of biological role, catalyzes the hydrolysis of N(2)-succinylarginine into N(2)-succinylornithine, ammonia and CO(2). This is N-succinylarginine dihydrolase from Escherichia coli O6:H1 (strain CFT073 / ATCC 700928 / UPEC).